Here is a 293-residue protein sequence, read N- to C-terminus: Non-structural protein NS-S (293 aa).

The tract at residues 21 to 29 (VRLEPSLGE) is essential for inhibition of IFN-beta activation and interaction with host TBK1. The involved in inclusion bodies formation stretch occupies residues 66–69 (PKNP). The interval 148–220 (FEGDMILDSL…KPLLDCWDFF (73 aa)) is interaction with host TNIP2.

It belongs to the Bandavirus NS-S protein family. Interacts with the host E3 ubiquitin ligase TRIM25; this interaction sequesters TRIM25 in NSs-induced cytoplasmic inclusion bodies. Interacts with the host E3 ubiquitin ligase RIGI; this interaction sequesters RIGI in NSs-induced cytoplasmic inclusion bodies. Interacts with the host E3 ubiquitin ligase TBK1 (via N-terminus); this interaction sequesters TBK1 in NSs-induced cytoplasmic inclusion bodies and inhibits TBK1 phosphorylation. NSs does not interact with IKBKE/IKKE or IRF3. Interacts with host IRF7; this interaction sequesters IRF7 in NSs-induced cytoplasmic inclusion bodies. Interacts with host SYNGR2; this interaction is essential to promoting the formation of the inclusion bodies to become virus factories for viral RNA replication through its interaction with NSs. Interacts with host STAT2; this interaction sequesters STAT2 in NSs-induced cytoplasmic inclusion bodies. Interacts with host TNIP2; this interaction promotes TPL2 complex formation and signaling activity leading to IL-10 production. Interacts with host TRIM21 (via B30.2/SPRY domain); this interaction activates host NFE2L2-mediated transcriptional activation of antioxidant genes. Interacts with host CDK1; this interaction is inclusion body dependent, it inhibits the formation and nuclear import of the cyclin B1-CDK1 complex and leads to host cell cycle arrest.

The protein resides in the host cytoplasm. It localises to the host cytoplasmic vesicle. Functionally, sequesters host STAT2 into viral inclusion bodies. Impairs IFN-stimulated phosphorylation and nuclear translocation of host STAT2, thereby suppressing type-I IFN antiviral signaling. Sequesters host TRIM25, RIGI, TBK1/IKK complex components (TBK1, IKBKE/IKKE, and IRF3) and IRF7 into viral inclusion bodies, thereby inhibiting the IFN responses. Inhibits TRIM25-mediated ubiquitination of the RIGI. The sequestration of IKBKE/IKKE, and IRF3 occurs via the interaction with TBK1. Sequestration and inhibition of host TBK1 probably participates to the cytokine storm induced by the virus. Also inhibits the phosphorylation of host TBK1. Interacts with host TNIP2 and promotes TPL2-TNIP2-p105 complex formation leading to IL-10 induction. By interacting with CDK1, induces host cell arrest at the G2/M transition to promote viral replication. Requested for the formation of the viral cytoplasmic inclusion bodies. In SFTS phlebovirus (isolate SFTSV/Human/China/HB29/2010) (Severe fever with thrombocytopenia virus), this protein is Non-structural protein NS-S (NSS).